A 220-amino-acid polypeptide reads, in one-letter code: Deoxyribose-phosphate aldolase (220 aa).

The active-site Proton donor/acceptor is the D89. K151 serves as the catalytic Schiff-base intermediate with acetaldehyde. K180 functions as the Proton donor/acceptor in the catalytic mechanism.

This sequence belongs to the DeoC/FbaB aldolase family. DeoC type 1 subfamily.

The protein resides in the cytoplasm. The catalysed reaction is 2-deoxy-D-ribose 5-phosphate = D-glyceraldehyde 3-phosphate + acetaldehyde. It participates in carbohydrate degradation; 2-deoxy-D-ribose 1-phosphate degradation; D-glyceraldehyde 3-phosphate and acetaldehyde from 2-deoxy-alpha-D-ribose 1-phosphate: step 2/2. In terms of biological role, catalyzes a reversible aldol reaction between acetaldehyde and D-glyceraldehyde 3-phosphate to generate 2-deoxy-D-ribose 5-phosphate. In Macrococcus caseolyticus (strain JCSC5402) (Macrococcoides caseolyticum), this protein is Deoxyribose-phosphate aldolase.